The following is a 68-amino-acid chain: Protein transport protein Sec61 subunit gamma (68 aa).

Over 1–32 the chain is Cytoplasmic; that stretch reads MDQIMQFVEPSRQFVKDSIRLVKRCTKPDRKE. A helical membrane pass occupies residues 33 to 61; sequence FQKIAMATAIGFAIMGFIGFFVKLIHIPI. At 62-68 the chain is on the extracellular side; it reads NNIIVGG.

The protein belongs to the SecE/SEC61-gamma family. In terms of assembly, the SEC61 channel-forming translocon complex consists of channel-forming core components SEC61A1, SEC61B and SEC61G and different auxiliary components such as SEC62 and SEC63. The SEC61 channel associates with the multi-pass translocon (MPT) complex.

Its subcellular location is the endoplasmic reticulum membrane. Its function is as follows. Component of SEC61 channel-forming translocon complex that mediates transport of signal peptide-containing precursor polypeptides across the endoplasmic reticulum (ER). Forms a ribosome receptor and a gated pore in the ER membrane, both functions required for cotranslational translocation of nascent polypeptides. The SEC61 channel is also involved in ER membrane insertion of transmembrane proteins: it mediates membrane insertion of the first few transmembrane segments of proteins, while insertion of subsequent transmembrane regions of multi-pass membrane proteins is mediated by the multi-pass translocon (MPT) complex. In Gadus morhua (Atlantic cod), this protein is Protein transport protein Sec61 subunit gamma (sec61g).